The following is a 2104-amino-acid chain: Protein Ycf2 (2104 aa).

Residue 1396–1403 participates in ATP binding; it reads GPVETGRS.

It belongs to the Ycf2 family.

The protein resides in the plastid. The protein localises to the chloroplast stroma. Its function is as follows. Probable ATPase of unknown function. Its presence in a non-photosynthetic plant (Epifagus virginiana) and experiments in tobacco indicate that it has an essential function which is probably not related to photosynthesis. The chain is Protein Ycf2 (ycf2-A) from Adiantum capillus-veneris (Maidenhair fern).